Consider the following 190-residue polypeptide: Large ribosomal subunit protein uL5 (190 aa).

It belongs to the universal ribosomal protein uL5 family. In terms of assembly, part of the 50S ribosomal subunit; part of the 5S rRNA/L5/L18/L25 subcomplex. Contacts the 5S rRNA and the P site tRNA. Forms a bridge to the 30S subunit in the 70S ribosome.

Functionally, this is one of the proteins that bind and probably mediate the attachment of the 5S RNA into the large ribosomal subunit, where it forms part of the central protuberance. In the 70S ribosome it contacts protein S13 of the 30S subunit (bridge B1b), connecting the 2 subunits; this bridge is implicated in subunit movement. Contacts the P site tRNA; the 5S rRNA and some of its associated proteins might help stabilize positioning of ribosome-bound tRNAs. The polypeptide is Large ribosomal subunit protein uL5 (Corynebacterium efficiens (strain DSM 44549 / YS-314 / AJ 12310 / JCM 11189 / NBRC 100395)).